Consider the following 67-residue polypeptide: LPS-assembly lipoprotein LptM (67 aa).

The N-terminal stretch at 1 to 19 is a signal peptide; it reads MKNVFKALTVLLTLFSLTG. A lipid anchor (N-palmitoyl cysteine) is attached at Cys-20. Cys-20 carries the S-diacylglycerol cysteine lipid modification. The segment at 26–67 is disordered; that stretch reads LYFPPADKNAPPPTKPVETQTQSTVPDKNDRATGDGPSQVNY. The segment covering 42 to 51 has biased composition (polar residues); sequence VETQTQSTVP.

This sequence belongs to the LptM family. In terms of assembly, interacts with the outer membrane embedded portion of the LPS translocon formed by LptD and LptE (LptDE).

The protein resides in the cell outer membrane. Component of the lipopolysaccharide (LPS) transport (Lpt) pathway that promotes efficient assembly of the outer membrane LPS translocon (LptDE) by the BAM complex. Facilitates oxidative maturation of LptD by stabilizing a conformation of the LPS translocon in which LptD can efficiently acquire native disulfide bonds, thereby activating the LPS translocon. The protein is LPS-assembly lipoprotein LptM of Escherichia coli O157:H7.